The primary structure comprises 87 residues: Kappa-3-bungarotoxin (87 aa).

An N-terminal signal peptide occupies residues 1 to 21 (MKTLLLSLVVVTIVCLDLGYT). Intrachain disulfides connect Cys-24/Cys-42, Cys-35/Cys-63, Cys-48/Cys-52, Cys-67/Cys-79, and Cys-80/Cys-85.

Belongs to the three-finger toxin family. Long-chain subfamily. Kappa-neurotoxin sub-subfamily. Homodimer and heterodimer with kappa 2-bungarotoxin; non-covalently-linked. In terms of tissue distribution, expressed by the venom gland.

It is found in the secreted. Its function is as follows. Postsynaptic neurotoxin that binds and inhibits neuronal nicotinic acetylcholine receptors (nAChR) with high affinity (IC(50)&lt;100 nM). Is a selective, and slowly reversible antagonist of alpha-3/CHRNA3-containing and some alpha-4/CHRNA4-containing AChRs. The protein is Kappa-3-bungarotoxin of Bungarus multicinctus (Many-banded krait).